Reading from the N-terminus, the 462-residue chain is Flavin-containing monooxygenase FMO GS-OX3 (462 aa).

17–22 contributes to the FAD binding site; the sequence is GAGPAG. Residue 212 to 217 participates in NADP(+) binding; the sequence is GNFASG. The helical transmembrane segment at 318–338 threads the bilayer; it reads ALAPGLAFVGLPAMGIVFVMF.

Belongs to the FMO family.

The protein resides in the membrane. The enzyme catalyses a (Z)-omega-(methylsulfanyl)-N-sulfo-alkylhydroximate S-glucoside + NADPH + O2 + H(+) = a (Z)-omega-(methylsulfinyl)-alkyl-glucosinolate + NADP(+) + H2O. In terms of biological role, catalyzes the conversion of methylthioalkyl glucosinolates of any chain length into methylsulfinylalkyl glucosinolates. Prefers probably short-chain methylthioalkyl glucosinolates in cv. Landsberg erecta. This Arabidopsis thaliana (Mouse-ear cress) protein is Flavin-containing monooxygenase FMO GS-OX3 (FMOGS-OX3).